The primary structure comprises 275 residues: Large ribosomal subunit protein uL2 (275 aa).

The disordered stretch occupies residues 223 to 275 (VAMNPIDHPHGGGEGRTSGGRHPVSPWGVPTKGYKTRSNKRTDKYIVRRRNKK).

It belongs to the universal ribosomal protein uL2 family. As to quaternary structure, part of the 50S ribosomal subunit. Forms a bridge to the 30S subunit in the 70S ribosome.

One of the primary rRNA binding proteins. Required for association of the 30S and 50S subunits to form the 70S ribosome, for tRNA binding and peptide bond formation. It has been suggested to have peptidyltransferase activity; this is somewhat controversial. Makes several contacts with the 16S rRNA in the 70S ribosome. The polypeptide is Large ribosomal subunit protein uL2 (Shewanella woodyi (strain ATCC 51908 / MS32)).